Consider the following 87-residue polypeptide: Translation initiation factor IF-1 2 (87 aa).

The S1-like domain maps to 1–72 (MAKEELLELD…TKGRINFRHK (72 aa)). The tract at residues 68–87 (NFRHKDANSPRPPRSGQPRR) is disordered. A compositionally biased stretch (pro residues) spans 77 to 87 (PRPPRSGQPRR).

This sequence belongs to the IF-1 family. In terms of assembly, component of the 30S ribosomal translation pre-initiation complex which assembles on the 30S ribosome in the order IF-2 and IF-3, IF-1 and N-formylmethionyl-tRNA(fMet); mRNA recruitment can occur at any time during PIC assembly.

It localises to the cytoplasm. One of the essential components for the initiation of protein synthesis. Stabilizes the binding of IF-2 and IF-3 on the 30S subunit to which N-formylmethionyl-tRNA(fMet) subsequently binds. Helps modulate mRNA selection, yielding the 30S pre-initiation complex (PIC). Upon addition of the 50S ribosomal subunit IF-1, IF-2 and IF-3 are released leaving the mature 70S translation initiation complex. The sequence is that of Translation initiation factor IF-1 2 from Burkholderia cenocepacia (strain HI2424).